Reading from the N-terminus, the 153-residue chain is Aspartate carbamoyltransferase regulatory chain (153 aa).

Zn(2+) is bound by residues C110, C115, C138, and C141.

Belongs to the PyrI family. Contains catalytic and regulatory chains. Zn(2+) serves as cofactor.

Functionally, involved in allosteric regulation of aspartate carbamoyltransferase. The sequence is that of Aspartate carbamoyltransferase regulatory chain from Bacteroides fragilis (strain ATCC 25285 / DSM 2151 / CCUG 4856 / JCM 11019 / LMG 10263 / NCTC 9343 / Onslow / VPI 2553 / EN-2).